Reading from the N-terminus, the 436-residue chain is Tryptophan synthase beta chain (436 aa).

The residue at position 129 (Lys129) is an N6-(pyridoxal phosphate)lysine.

The protein belongs to the TrpB family. In terms of assembly, tetramer of two alpha and two beta chains. Pyridoxal 5'-phosphate is required as a cofactor.

The enzyme catalyses (1S,2R)-1-C-(indol-3-yl)glycerol 3-phosphate + L-serine = D-glyceraldehyde 3-phosphate + L-tryptophan + H2O. The protein operates within amino-acid biosynthesis; L-tryptophan biosynthesis; L-tryptophan from chorismate: step 5/5. In terms of biological role, the beta subunit is responsible for the synthesis of L-tryptophan from indole and L-serine. This chain is Tryptophan synthase beta chain, found in Prochlorococcus marinus (strain MIT 9313).